Reading from the N-terminus, the 149-residue chain is Protein FAM72B (149 aa).

It belongs to the FAM72 family.

The protein is Protein FAM72B (FAM72B) of Homo sapiens (Human).